An 899-amino-acid chain; its full sequence is MLKAVLEPAIGSKSKRDLKDYLPTLRNINKLERWALLLADEDFSKETQKLKYELKSGNSLENILERAFTLSREAARRRLKERPYDVQIIAGLALHEGKIIEMKTGEGKTLSSVQAAYLNSLTGDGVIIVTVNDYLAERDSNWMKPVFDLLGVTVGVVLSNMDYERRKDQYAKDITYVTNNELGFDYLRDNMRYDLNEKCLRKFNYCIIDEIDSILIDEARTPLIISGPTEGNTNAYLEVNSLVSFLKECSKDSKSGDYPLEIDDLDGDYTIDEKAKRISFTAKGLNNLEQLLVSKGIISGSLYTDSNFNYVHYMTQALKAHLLFFKNREYIVGDSGVEIVDEFTGRVLTGRRYSDGLHQAIEAKEEVRVANENKTMATITFQNLFRMFDKISGMTGTADTEAKEFHKIYNLDVVVVPTNRLLARIDEEDTIYYTEEFKFHAITDEVYKTYKKGQPVLVGTASIEKSEILSAMFKNRGIKHEVLNAKNHSREAFIIAEAGAKHAVTIATNMAGRGTDIKLGGNIEHRVRKKIGTNVSLEEFQEAVKNERENYLKDYNEVKSLGGLYVIGSERHESRRIDNQLRGRSGRQGDPGRSRFYVSLEDDLMRLFAGDSLRSLMGKLGMATGEPITHSLLTKSLINAQKRVEDRNFEIRKHLLEYDDVITKQRDFIYAQRNSILEDTAIKDRILIALEEYLSFLLEGTKGGSVSSVFLNEINLIFAYMLESLGSIENINSLDLKAKLMQIARANLDEKENLIGRDLFNGFLRYEYLKNIDFKFQEHLANLDSLREAVYLRSYANKNPITEYKEEGFLIFSELIKDIKVSTIRRVLQLKLDSNSSDFKSVKKSKNVNSIHKELSGILINENKNVSNVQVVRSSPKIGRNEPCYCGSGKKYKNCHGKS.

Residues Gln-87, 105-109 (GEGKT), and Asp-516 each bind ATP. The Zn(2+) site is built by Cys-884, Cys-886, Cys-895, and His-896.

Belongs to the SecA family. Monomer and homodimer. Part of the essential Sec protein translocation apparatus which comprises SecA, SecYEG and auxiliary proteins SecDF. Other proteins may also be involved. The cofactor is Zn(2+).

It is found in the cell inner membrane. Its subcellular location is the cytoplasm. The catalysed reaction is ATP + H2O + cellular proteinSide 1 = ADP + phosphate + cellular proteinSide 2.. Its function is as follows. Part of the Sec protein translocase complex. Interacts with the SecYEG preprotein conducting channel. Has a central role in coupling the hydrolysis of ATP to the transfer of proteins into and across the cell membrane, serving as an ATP-driven molecular motor driving the stepwise translocation of polypeptide chains across the membrane. The protein is Protein translocase subunit SecA of Borrelia garinii subsp. bavariensis (strain ATCC BAA-2496 / DSM 23469 / PBi) (Borreliella bavariensis).